The sequence spans 779 residues: Ribonucleoside-diphosphate reductase large subunit (779 aa).

Substrate is bound by residues Ser178, Ser193–Cys194, Gly222, Asn420–Glu424, and Pro614–Ser618. Cys194 and Cys440 form a disulfide bridge. Asn420 functions as the Proton acceptor in the catalytic mechanism. Cys422 (cysteine radical intermediate) is an active-site residue. Glu424 (proton acceptor) is an active-site residue.

Belongs to the ribonucleoside diphosphate reductase large chain family. In terms of assembly, heterotetramer composed of a homodimer of the large subunit (R1) and a homodimer of the small subunit (R2). Larger multisubunit protein complex are also active, composed of (R1)n(R2)n.

The catalysed reaction is a 2'-deoxyribonucleoside 5'-diphosphate + [thioredoxin]-disulfide + H2O = a ribonucleoside 5'-diphosphate + [thioredoxin]-dithiol. Its activity is regulated as follows. Under complex allosteric control mediated by deoxynucleoside triphosphates and ATP binding. The type of nucleotide bound at the specificity site determines substrate preference. It seems probable that ATP makes the enzyme reduce CDP and UDP, dGTP favors ADP reduction and dTTP favors GDP reduction. Functionally, ribonucleoside-diphosphate reductase holoenzyme provides the precursors necessary for viral DNA synthesis. Allows virus growth in non-dividing cells. Catalyzes the biosynthesis of deoxyribonucleotides from the corresponding ribonucleotides. The polypeptide is Ribonucleoside-diphosphate reductase large subunit (Ornithodoros (relapsing fever ticks)).